The sequence spans 162 residues: Protein archease (162 aa).

Residues D34, D161, and I162 each contribute to the Ca(2+) site.

It belongs to the archease family. As to quaternary structure, component of the tRNA-splicing ligase complex.

In terms of biological role, component of the tRNA-splicing ligase complex required to facilitate the enzymatic turnover of catalytic subunit RTCB. Together with ddx1, acts by facilitating the guanylylation of RTCB, a key intermediate step in tRNA ligation. This is Protein archease (zbtb8os) from Danio rerio (Zebrafish).